Here is a 70-residue protein sequence, read N- to C-terminus: MIFKVFYQEKLTEVPVRENTKVLYLEATSEKDVRTKLNKFAYNIEFVQSVTGAHLEYEKENADLTLAEIV.

This sequence belongs to the RNA polymerase subunit epsilon family. As to quaternary structure, RNAP is composed of a core of 2 alpha, a beta and a beta' subunit. The core is associated with a delta subunit, and at least one of epsilon or omega. When a sigma factor is associated with the core the holoenzyme is formed, which can initiate transcription.

It catalyses the reaction RNA(n) + a ribonucleoside 5'-triphosphate = RNA(n+1) + diphosphate. Functionally, a non-essential component of RNA polymerase (RNAP). This chain is DNA-directed RNA polymerase subunit epsilon, found in Bacillus cereus (strain ATCC 14579 / DSM 31 / CCUG 7414 / JCM 2152 / NBRC 15305 / NCIMB 9373 / NCTC 2599 / NRRL B-3711).